Reading from the N-terminus, the 202-residue chain is Ribonuclease HII (202 aa).

The 188-residue stretch at 15–202 (QGVAGVDEAG…APIKAFGISA (188 aa)) folds into the RNase H type-2 domain. Asp21, Glu22, and Asp113 together coordinate a divalent metal cation.

This sequence belongs to the RNase HII family. Mn(2+) is required as a cofactor. It depends on Mg(2+) as a cofactor.

The protein resides in the cytoplasm. The enzyme catalyses Endonucleolytic cleavage to 5'-phosphomonoester.. Functionally, endonuclease that specifically degrades the RNA of RNA-DNA hybrids. This is Ribonuclease HII from Bordetella avium (strain 197N).